Here is a 37-residue protein sequence, read N- to C-terminus: Mu-cyrtautoxin-As1a (37 aa).

Intrachain disulfides connect cysteine 1–cysteine 15, cysteine 8–cysteine 19, cysteine 14–cysteine 35, and cysteine 26–cysteine 31.

It belongs to the neurotoxin 13 (insecticidal toxin ABC) family. 01 (Aps III) subfamily. Expressed by the venom gland.

The protein localises to the secreted. Its function is as follows. The recombinant mu-cyrtautoxin-As1a potently and voltage-independently blocks voltage-gated sodium channels (Nav) of insects. It acts by pluging the outer vestibule of the channel. It acts in combination with a weak (30%) voltage-independent block of insect voltage-gated calcium (Cav) channels (low-voltage and high-voltage channels). Tested on DUM neurons, it inhibits sodium currents with an IC(50) of 540 nM (and a Hill coefficient &gt;1, reflecting an incomplete block at higher concentrations). In vivo, it induces flaccid paralysis in adult Australian sheep blowfly Lucilia cuprina. It is both paralytic and lethal, when injected into lepidopteran larvae. It is a slower acting toxin, being lethal at 24 hours, but not paralytic at 1 hour post-injection. The sequence is that of Mu-cyrtautoxin-As1a from Apomastus schlingeri (Trap-door spider).